The primary structure comprises 138 residues: Translation initiation factor 2 subunit beta (138 aa).

The protein belongs to the eIF-2-beta/eIF-5 family. As to quaternary structure, heterotrimer composed of an alpha, a beta and a gamma chain.

Functionally, eIF-2 functions in the early steps of protein synthesis by forming a ternary complex with GTP and initiator tRNA. The chain is Translation initiation factor 2 subunit beta from Methanococcus maripaludis (strain C5 / ATCC BAA-1333).